The primary structure comprises 482 residues: UDP-N-acetylmuramate--L-alanine ligase (482 aa).

A disordered region spans residues 1 to 26; it reads MPQLPMTDSAPLPTPAPSSPAQPSAQ. 140-146 is an ATP binding site; sequence GTHGKTT.

Belongs to the MurCDEF family.

It localises to the cytoplasm. It carries out the reaction UDP-N-acetyl-alpha-D-muramate + L-alanine + ATP = UDP-N-acetyl-alpha-D-muramoyl-L-alanine + ADP + phosphate + H(+). It functions in the pathway cell wall biogenesis; peptidoglycan biosynthesis. Its function is as follows. Cell wall formation. This is UDP-N-acetylmuramate--L-alanine ligase from Deinococcus radiodurans (strain ATCC 13939 / DSM 20539 / JCM 16871 / CCUG 27074 / LMG 4051 / NBRC 15346 / NCIMB 9279 / VKM B-1422 / R1).